The sequence spans 447 residues: GTPase Der (447 aa).

EngA-type G domains are found at residues 4-165 (QIIT…PEEE) and 180-357 (LQIV…KIWN). Residues 10–17 (GRPNVGKS), 57–61 (DTPGL), 119–122 (NKCE), 186–193 (GRPNAGKS), 233–237 (DTAGL), and 298–301 (NKWD) each bind GTP. A KH-like domain is found at 358–443 (KKITTSKLNE…PIRFIYVKTK (86 aa)).

Belongs to the TRAFAC class TrmE-Era-EngA-EngB-Septin-like GTPase superfamily. EngA (Der) GTPase family. In terms of assembly, associates with the 50S ribosomal subunit.

Its function is as follows. GTPase that plays an essential role in the late steps of ribosome biogenesis. The protein is GTPase Der of Rickettsia africae (strain ESF-5).